The sequence spans 470 residues: Acetyl-CoA decarbonylase/synthase complex subunit gamma 2 (470 aa).

Positions 1-60 constitute a 4Fe-4S domain; the sequence is MKINSPLEAYKYLPQTNCGECGQPTCMAFASTLIDRSGKTTDCPPLIKEKKFAKKLAELD. [4Fe-4S] cluster is bound by residues C18, C21, C26, and C43.

In terms of assembly, heterodimer of delta and gamma chains. The ACDS complex is made up of alpha, epsilon, beta, gamma and delta chains with a probable stoichiometry of (alpha(2)epsilon(2))(4)-beta(8)-(gamma(1)delta(1))(8). It depends on corrinoid as a cofactor. [4Fe-4S] cluster serves as cofactor.

It carries out the reaction 5,6,7,8-tetrahydrosarcinapterin + methyl-Co(III)-[corrinoid Fe-S protein] = 5-methyltetrahydrosarcinapterin + Co(I)-[corrinoid Fe-S protein] + H(+). Its pathway is one-carbon metabolism; methanogenesis from acetate. Functionally, part of a complex that catalyzes the reversible cleavage of acetyl-CoA, allowing growth on acetate as sole source of carbon and energy. This is Acetyl-CoA decarbonylase/synthase complex subunit gamma 2 from Methanosarcina mazei (strain ATCC BAA-159 / DSM 3647 / Goe1 / Go1 / JCM 11833 / OCM 88) (Methanosarcina frisia).